We begin with the raw amino-acid sequence, 491 residues long: Beta-galactosidase (491 aa).

The active-site Proton donor is the Glu-209. Glu-389 serves as the catalytic Nucleophile.

The protein belongs to the glycosyl hydrolase 1 family.

The enzyme catalyses Hydrolysis of terminal non-reducing beta-D-galactose residues in beta-D-galactosides.. The sequence is that of Beta-galactosidase (bgaS) from Sulfolobus acidocaldarius (strain ATCC 33909 / DSM 639 / JCM 8929 / NBRC 15157 / NCIMB 11770).